Reading from the N-terminus, the 173-residue chain is Crossover junction endodeoxyribonuclease RuvC (173 aa).

Active-site residues include Asp-8, Glu-67, and Asp-139. Mg(2+) contacts are provided by Asp-8, Glu-67, and Asp-139.

The protein belongs to the RuvC family. Homodimer which binds Holliday junction (HJ) DNA. The HJ becomes 2-fold symmetrical on binding to RuvC with unstacked arms; it has a different conformation from HJ DNA in complex with RuvA. In the full resolvosome a probable DNA-RuvA(4)-RuvB(12)-RuvC(2) complex forms which resolves the HJ. Requires Mg(2+) as cofactor.

The protein resides in the cytoplasm. The enzyme catalyses Endonucleolytic cleavage at a junction such as a reciprocal single-stranded crossover between two homologous DNA duplexes (Holliday junction).. In terms of biological role, the RuvA-RuvB-RuvC complex processes Holliday junction (HJ) DNA during genetic recombination and DNA repair. Endonuclease that resolves HJ intermediates. Cleaves cruciform DNA by making single-stranded nicks across the HJ at symmetrical positions within the homologous arms, yielding a 5'-phosphate and a 3'-hydroxyl group; requires a central core of homology in the junction. The consensus cleavage sequence is 5'-(A/T)TT(C/G)-3'. Cleavage occurs on the 3'-side of the TT dinucleotide at the point of strand exchange. HJ branch migration catalyzed by RuvA-RuvB allows RuvC to scan DNA until it finds its consensus sequence, where it cleaves and resolves the cruciform DNA. The protein is Crossover junction endodeoxyribonuclease RuvC of Shewanella woodyi (strain ATCC 51908 / MS32).